The sequence spans 473 residues: Cysteine--tRNA ligase (473 aa).

Zn(2+) is bound at residue Cys-27. The short motif at 29-39 (ITPYDHMHVGH) is the 'HIGH' region element. Positions 213, 238, and 242 each coordinate Zn(2+). The 'KMSKS' region motif lies at 271-275 (KMSKS). Lys-274 is an ATP binding site.

This sequence belongs to the class-I aminoacyl-tRNA synthetase family. Zn(2+) is required as a cofactor.

Its subcellular location is the cytoplasm. It catalyses the reaction tRNA(Cys) + L-cysteine + ATP = L-cysteinyl-tRNA(Cys) + AMP + diphosphate. The chain is Cysteine--tRNA ligase from Pyrobaculum islandicum (strain DSM 4184 / JCM 9189 / GEO3).